Here is a 309-residue protein sequence, read N- to C-terminus: Porphobilinogen deaminase (309 aa).

Position 240 is an S-(dipyrrolylmethanemethyl)cysteine (Cys-240).

The protein belongs to the HMBS family. Monomer. It depends on dipyrromethane as a cofactor.

It catalyses the reaction 4 porphobilinogen + H2O = hydroxymethylbilane + 4 NH4(+). It functions in the pathway porphyrin-containing compound metabolism; protoporphyrin-IX biosynthesis; coproporphyrinogen-III from 5-aminolevulinate: step 2/4. Functionally, tetrapolymerization of the monopyrrole PBG into the hydroxymethylbilane pre-uroporphyrinogen in several discrete steps. The polypeptide is Porphobilinogen deaminase (Chromobacterium violaceum (strain ATCC 12472 / DSM 30191 / JCM 1249 / CCUG 213 / NBRC 12614 / NCIMB 9131 / NCTC 9757 / MK)).